The sequence spans 425 residues: Protein UL117 (425 aa).

Residues 59–83 form a disordered region; sequence PTTTSSSLAPPRDDERRPTPPLRPP.

It belongs to the herpesviridae U84 family.

The protein resides in the host nucleus. Functionally, plays a role in the inhibition of host DNA replication in the infected cell. Targets the mini-chromosome maintenance (MCM) complex and blocks the accumulation of MCM proteins and their loading onto host chromatin. In Homo sapiens (Human), this protein is Protein UL117 (UL117).